Consider the following 216-residue polypeptide: Probable flavin-dependent thymidylate synthase (216 aa).

A ThyX domain is found at 1 to 216 (MSAKLISVTK…PSIAKALDWV (216 aa)). FAD is bound by residues Ser55, 78-80 (RHR), and Glu86. DUMP is bound by residues 75 to 78 (QVLR), 86 to 90 (EFSQR), and Arg155. The ThyX motif motif lies at 78–88 (RHRSFHFQEFS). His177 contacts FAD. Position 182 (Arg182) interacts with dUMP. The active-site Involved in ionization of N3 of dUMP, leading to its activation is the Arg182.

The protein belongs to the thymidylate synthase ThyX family. Homotetramer. It depends on FAD as a cofactor.

The catalysed reaction is dUMP + (6R)-5,10-methylene-5,6,7,8-tetrahydrofolate + NADPH + H(+) = dTMP + (6S)-5,6,7,8-tetrahydrofolate + NADP(+). Its pathway is pyrimidine metabolism; dTTP biosynthesis. Catalyzes the reductive methylation of 2'-deoxyuridine-5'-monophosphate (dUMP) to 2'-deoxythymidine-5'-monophosphate (dTMP) while utilizing 5,10-methylenetetrahydrofolate (mTHF) as the methyl donor, and NADPH and FADH(2) as the reductant. This is Probable flavin-dependent thymidylate synthase from Paramecium bursaria Chlorella virus 1 (PBCV-1).